Consider the following 117-residue polypeptide: UPF0342 protein lmo2223 (117 aa).

Belongs to the UPF0342 family.

This is UPF0342 protein lmo2223 from Listeria monocytogenes serovar 1/2a (strain ATCC BAA-679 / EGD-e).